We begin with the raw amino-acid sequence, 149 residues long: Urease accessory protein UreE (149 aa).

This sequence belongs to the UreE family.

It localises to the cytoplasm. Functionally, involved in urease metallocenter assembly. Binds nickel. Probably functions as a nickel donor during metallocenter assembly. The sequence is that of Urease accessory protein UreE from Ureaplasma parvum serovar 3 (strain ATCC 700970).